We begin with the raw amino-acid sequence, 490 residues long: Glutamyl-tRNA(Gln) amidotransferase subunit A (490 aa).

Active-site charge relay system residues include Lys-78 and Ser-158. The disordered stretch occupies residues 131 to 159 (SNETSRFGPPINPWRRKGDNAGLTPGGSS). The Acyl-ester intermediate role is filled by Ser-182.

The protein belongs to the amidase family. GatA subfamily. In terms of assembly, heterotrimer of A, B and C subunits.

The catalysed reaction is L-glutamyl-tRNA(Gln) + L-glutamine + ATP + H2O = L-glutaminyl-tRNA(Gln) + L-glutamate + ADP + phosphate + H(+). Allows the formation of correctly charged Gln-tRNA(Gln) through the transamidation of misacylated Glu-tRNA(Gln) in organisms which lack glutaminyl-tRNA synthetase. The reaction takes place in the presence of glutamine and ATP through an activated gamma-phospho-Glu-tRNA(Gln). The chain is Glutamyl-tRNA(Gln) amidotransferase subunit A from Hyphomonas neptunium (strain ATCC 15444).